We begin with the raw amino-acid sequence, 193 residues long: Cbp/p300-interacting transactivator 1 (193 aa).

Disordered regions lie at residues 1–26, 50–88, and 106–147; these read MPTT…NQEM, VASN…LHPA, and GMAA…SPAI. Residues 54-73 are compositionally biased toward low complexity; sequence GTKASGAPTSSSGSPIGSPT. The Nuclear export signal motif lies at 158–167; sequence LMSLVVELGL.

Belongs to the CITED family. As to quaternary structure, interacts (via C-terminus) with CREBBP. Interacts with EGR2. Homodimer. Binds to RBM14. Interacts (via N-terminus) with HSPA8; the interaction suppresses the association of CITED1 with p300/CBP and SMAD-mediated transcription transactivation. Interacts (via C-terminus) with TOX3 (via HGM box); the interaction increases estrogen-response element (ERE)-dependent transcription and protection against cell death. Interacts with ESR1; the interaction occurs in a estrogen-dependent manner. Interacts (unphosphorylated form preferentially and via C-terminus) with EP300. Post-translationally, phosphorylated. Phosphorylation changes in a cell cycle-dependent manner and reduces its transcriptional coactivator activity. As to expression, expressed only in melanocytes and testis.

Its subcellular location is the nucleus. It localises to the cytoplasm. Its function is as follows. Transcriptional coactivator of the p300/CBP-mediated transcription complex. Enhances SMAD-mediated transcription by strengthening the functional link between the DNA-binding SMAD transcription factors and the p300/CBP transcription coactivator complex. Stimulates estrogen-dependent transactivation activity mediated by estrogen receptors signaling; stabilizes the interaction of estrogen receptor ESR1 and histone acetyltransferase EP300. Positively regulates TGF-beta signaling through its association with the SMAD/p300/CBP-mediated transcriptional coactivator complex. Induces transcription from estrogen-responsive promoters and protection against cell death. Potentiates EGR2-mediated transcriptional activation activity from the ERBB2 promoter. Acts as an inhibitor of osteoblastic mineralization through a cAMP-dependent parathyroid hormone receptor signaling. May play a role in pigmentation of melanocytes. Associates with chromatin to the estrogen-responsive TGF-alpha promoter region in a estrogen-dependent manner. In Homo sapiens (Human), this protein is Cbp/p300-interacting transactivator 1 (CITED1).